A 713-amino-acid polypeptide reads, in one-letter code: Forkhead box protein P2 (713 aa).

The segment covering 1-28 has biased composition (polar residues); sequence MMQESATETISNSSMNQNGMSTLSSQLD. 2 disordered regions span residues 1 to 44 and 283 to 337; these read MMQE…SSEV and KHGG…TGAS. The span at 290–303 shows a compositional bias: low complexity; the sequence is TTNNSSSTTSSTTS. Residues 313-322 show a composition bias toward polar residues; it reads SIVNGQSSVL. Over residues 324–335 the composition is skewed to basic and acidic residues; the sequence is ARRDSSSHEETG. A C2H2-type zinc finger spans residues 344–369; that stretch reads GVCKWPGCESICEDFGQFLKHLNNEH. The leucine-zipper stretch occupies residues 386–407; that stretch reads VQQLEIQLSKERERLQAMMTHL. The segment at 420–424 is CTBP1-binding; that stretch reads PLNLV. Positions 436–457 are enriched in low complexity; it reads TSPQSLPQTPTTPTAPVTPITQ. Residues 436–463 are disordered; sequence TSPQSLPQTPTTPTAPVTPITQGPSVIT. The fork-head DNA-binding region spans 502-592; sequence RPPFTYATLI…SQKITGSPTL (91 aa). Disordered stretches follow at residues 647–666 and 676–713; these read LDHI…QPHI and VIAE…EDLE. The span at 697 to 713 shows a compositional bias: acidic residues; it reads LEDDREIEEEPLSEDLE.

Forms homodimers and heterodimers with FOXP1 and FOXP4. Dimerization is required for DNA-binding. Interacts with CTBP1. Interacts with FOXP1. Interacts with TBR1. Interacts with ZMYM2.

Its subcellular location is the nucleus. Its function is as follows. Transcriptional repressor that may play a role in the specification and differentiation of lung epithelium. May also play a role in developing neural, gastrointestinal and cardiovascular tissues. Can act with CTBP1 to synergistically repress transcription but CTPBP1 is not essential. Plays a role in synapse formation by regulating SRPX2 levels. The sequence is that of Forkhead box protein P2 (FOXP2) from Gorilla gorilla gorilla (Western lowland gorilla).